A 493-amino-acid polypeptide reads, in one-letter code: Phospholipid transfer protein (493 aa).

Positions 1-17 (MALFGALFLALLAGAHA) are cleaved as a signal peptide. Asn64 is a glycosylation site (N-linked (GlcNAc...) (complex) asparagine). An N-linked (GlcNAc...) asparagine glycan is attached at Asn94. A glycan (N-linked (GlcNAc...) (complex) asparagine) is linked at Asn117. Residue Asn143 is glycosylated (N-linked (GlcNAc...) asparagine). A disulfide bridge links Cys146 with Cys185. Residue Asn245 is glycosylated (N-linked (GlcNAc...) (complex) asparagine). N-linked (GlcNAc...) asparagine glycosylation is present at Asn398.

Belongs to the BPI/LBP/Plunc superfamily. BPI/LBP family. Glycosylation is necessary for secretion and its phospholipid transfer activity. Widely expressed. Highest level of expression in the ovary, thymus and placenta, with moderate levels found in the pancreas, small intestine, testis, lung and prostrate. Low level expression in the kidney, liver and spleen, with very low levels found in the heart, colon, skeletal muscle, leukocytes and brain. Expressed in the cortical neurons.

The protein localises to the secreted. Its subcellular location is the nucleus. The enzyme catalyses a 1,2-diacyl-sn-glycero-3-phosphocholine(in) = a 1,2-diacyl-sn-glycero-3-phosphocholine(out). It carries out the reaction a 1,2-diacyl-sn-glycero-3-phosphoethanolamine(in) = a 1,2-diacyl-sn-glycero-3-phosphoethanolamine(out). The catalysed reaction is a 1,2-diacyl-sn-glycerol(in) = a 1,2-diacyl-sn-glycerol(out). It catalyses the reaction a 1,2-diacyl-sn-glycero-3-phosphate(in) = a 1,2-diacyl-sn-glycero-3-phosphate(out). The enzyme catalyses a sphingomyelin(in) = a sphingomyelin(out). It carries out the reaction a 1,2-diacyl-sn-glycero-3-phospho-(1'-sn-glycerol)(in) = a 1,2-diacyl-sn-glycero-3-phospho-(1'-sn-glycerol)(out). The catalysed reaction is a 1,2-diacyl-sn-glycero-3-phospho-(1D-myo-inositol)(in) = a 1,2-diacyl-sn-glycero-3-phospho-(1D-myo-inositol)(out). It catalyses the reaction 1-hexadecanoyl-2-(5Z,8Z,11Z,14Z-eicosatetraenoyl)-sn-glycero-3-phosphoethanolamine(in) = 1-hexadecanoyl-2-(5Z,8Z,11Z,14Z-eicosatetraenoyl)-sn-glycero-3-phosphoethanolamine(out). The enzyme catalyses N-(hexadecanoyl)-sphing-4-enine-1-phosphocholine(in) = N-(hexadecanoyl)-sphing-4-enine-1-phosphocholine(out). It carries out the reaction 1,2-dihexadecanoyl-sn-glycero-3-phosphocholine(in) = 1,2-dihexadecanoyl-sn-glycero-3-phosphocholine(out). Its function is as follows. Mediates the transfer of phospholipids and free cholesterol from triglyceride-rich lipoproteins (low density lipoproteins or LDL and very low density lipoproteins or VLDL) into high-density lipoproteins (HDL) as well as the exchange of phospholipids between triglyceride-rich lipoproteins themselves. Facilitates the transfer of a spectrum of different lipid molecules, including diacylglycerol, phosphatidic acid, sphingomyelin, phosphatidylcholine, phosphatidylinositol, phosphatidylglycerol, cerebroside and phosphatidyl ethanolamine. Plays an important role in HDL remodeling which involves modulating the size and composition of HDL. Also plays a key role in the uptake of cholesterol from peripheral cells and tissues that is subsequently transported to the liver for degradation and excretion. Two distinct forms of PLTP exist in plasma: an active form that can transfer phosphatidylcholine from phospholipid vesicles to HDL, and an inactive form that lacks this capability. This is Phospholipid transfer protein (PLTP) from Homo sapiens (Human).